Consider the following 349-residue polypeptide: tRNA pseudouridine synthase D (349 aa).

Residue Phe27 coordinates substrate. Residue Asp80 is the Nucleophile of the active site. Asn129 lines the substrate pocket. One can recognise a TRUD domain in the interval 155-303 (GVPNYFGAQR…VEAARRAMLL (149 aa)). Phe329 is a substrate binding site.

This sequence belongs to the pseudouridine synthase TruD family.

The catalysed reaction is uridine(13) in tRNA = pseudouridine(13) in tRNA. Its function is as follows. Responsible for synthesis of pseudouridine from uracil-13 in transfer RNAs. The polypeptide is tRNA pseudouridine synthase D (Shigella boydii serotype 18 (strain CDC 3083-94 / BS512)).